The chain runs to 354 residues: Thiamine thiazole synthase (354 aa).

Residues A83, 104–105 (EA), G112, and V177 contribute to the substrate site. The residue at position 210 (C210) is a 2,3-didehydroalanine (Cys). Substrate-binding positions include D212, H227, M305, and 315 to 317 (RMR).

Belongs to the THI4 family. Homooctamer. The cofactor is Fe cation. Post-translationally, during the catalytic reaction, a sulfide is transferred from Cys-210 to a reaction intermediate, generating a dehydroalanine residue.

Its subcellular location is the cytoplasm. It is found in the nucleus. The enzyme catalyses [ADP-thiazole synthase]-L-cysteine + glycine + NAD(+) = [ADP-thiazole synthase]-dehydroalanine + ADP-5-ethyl-4-methylthiazole-2-carboxylate + nicotinamide + 3 H2O + 2 H(+). Involved in biosynthesis of the thiamine precursor thiazole. Catalyzes the conversion of NAD and glycine to adenosine diphosphate 5-(2-hydroxyethyl)-4-methylthiazole-2-carboxylic acid (ADT), an adenylated thiazole intermediate. The reaction includes an iron-dependent sulfide transfer from a conserved cysteine residue of the protein to a thiazole intermediate. The enzyme can only undergo a single turnover, which suggests it is a suicide enzyme. May have additional roles in adaptation to various stress conditions and in DNA damage tolerance. The chain is Thiamine thiazole synthase from Candida albicans (strain WO-1) (Yeast).